Here is a 373-residue protein sequence, read N- to C-terminus: Putative aminopeptidase SgcX (373 aa).

A divalent metal cation is bound by residues His-67 and Asp-180. The Proton acceptor role is filled by Glu-212. Glu-213, Asp-235, and His-329 together coordinate a divalent metal cation.

This sequence belongs to the peptidase M42 family. The cofactor is a divalent metal cation.

This is Putative aminopeptidase SgcX (sgcX) from Escherichia coli (strain K12).